A 71-amino-acid chain; its full sequence is Large ribosomal subunit protein bL31 (71 aa).

4 residues coordinate Zn(2+): cysteine 16, cysteine 18, cysteine 37, and cysteine 40.

It belongs to the bacterial ribosomal protein bL31 family. Type A subfamily. As to quaternary structure, part of the 50S ribosomal subunit. Zn(2+) is required as a cofactor.

Binds the 23S rRNA. This chain is Large ribosomal subunit protein bL31, found in Wigglesworthia glossinidia brevipalpis.